Reading from the N-terminus, the 173-residue chain is Insertion element IS1397 uncharacterized 20.1 kDa protein (173 aa).

Positions Lys-115–Met-135 are disordered.

The protein belongs to the IS150/IS1296 orfA family.

The protein is Insertion element IS1397 uncharacterized 20.1 kDa protein of Escherichia coli.